Consider the following 154-residue polypeptide: 8-oxo-dGTP diphosphatase (154 aa).

Residues 1–129 form the Nudix hydrolase domain; that stretch reads MPQLATICYI…DHTFVEWLLE (129 aa). Residues G38, E53, E56, and E57 each contribute to the Mg(2+) site. The Nudix box motif lies at 38 to 59; the sequence is GKLERGETPQECAVREILEETG.

It belongs to the Nudix hydrolase family. Homotrimer. The cofactor is Mg(2+).

It catalyses the reaction 8-oxo-dGTP + H2O = 8-oxo-dGMP + diphosphate + H(+). Functionally, involved in the DNA repair system to avoid A.T to G.C transversions. Degrades 8-oxo-dGTP to the monophosphate, but is also active on all of the nucleoside triphosphates. The sequence is that of 8-oxo-dGTP diphosphatase (mutX) from Streptococcus pneumoniae (strain ATCC BAA-255 / R6).